A 286-amino-acid chain; its full sequence is uncharacterized protein (286 aa).

2 helical membrane passes run 201-221 (VIYSITGAFSFIFGLGVLCET) and 231-251 (AIILGFIILILILAIVNYLMM).

It localises to the cell membrane. This is an uncharacterized protein from Methanocaldococcus jannaschii (strain ATCC 43067 / DSM 2661 / JAL-1 / JCM 10045 / NBRC 100440) (Methanococcus jannaschii).